Reading from the N-terminus, the 1214-residue chain is Formin-D (1214 aa).

The 370-residue stretch at 10 to 379 folds into the GBD/FH3 domain; the sequence is KKEESPQSID…KMNNGESYLD (370 aa). Residues 401–448 are a coiled coil; it reads SGEKAVLIQKEIEDLKKQKKRDQDKLAEKDKLLTKLAKRMRKMEEAIK. An FH1 domain is found at 457–544; sequence NNQIEIESPP…GSGDGIPLPP (88 aa). Composition is skewed to polar residues over residues 462–479 and 518–534; these read IESP…TTPG and LDTT…QTEA. Disordered regions lie at residues 462–490, 507–569, 868–948, 1026–1045, 1054–1089, and 1133–1214; these read IESP…TSPV, APNG…SRPP, PKSV…PLKD, DKST…IKKS, LKKI…DDED, and MNLQ…EGEN. Residues 541-554 show a composition bias toward pro residues; it reads PLPPGAPPPPPPPG. The region spanning 562–1037 is the FH2 domain; that stretch reads PQLCSRPPSI…STQRKNEKER (476 aa). Residues 868 to 877 are compositionally biased toward basic and acidic residues; that stretch reads PKSVEPKPDD. Residues 930-940 are compositionally biased toward polar residues; it reads QVNTNSTSDSK. The stretch at 1019–1056 forms a coiled coil; it reads EIEKSIKDKSTQRKNEKERKEMEIKKSKLEMIHSKLKK. Positions 1059–1071 are enriched in polar residues; that stretch reads SPSSSNRILASNE. Positions 1065 to 1095 constitute a DAD domain; sequence RILASNESSPTSSTSSVVHQHDDEDEETIKE. Over residues 1161–1171 the composition is skewed to low complexity; it reads SSTYSSISSIY. A compositionally biased stretch (acidic residues) spans 1174–1214; sequence EPLDMSDQEDEDEEEEEDEEEEEEEEEGDDDNDNDEEEGEN. A coiled-coil region spans residues 1176–1207; sequence LDMSDQEDEDEEEEEDEEEEEEEEEGDDDNDN.

It belongs to the formin homology family. Diaphanous subfamily. Interacts (via GBD/FH3 domain) with activated Rho-GTPases.

Formins play an important role in the nucleation of actin and the formation of linear actin filaments. This chain is Formin-D (forD), found in Dictyostelium discoideum (Social amoeba).